Here is an 895-residue protein sequence, read N- to C-terminus: Glutamate receptor 2.3 (895 aa).

An N-terminal signal peptide occupies residues 1 to 23 (MRTEKLFFCILLVFFFCLEFNRG). Topologically, residues 24 to 582 (QNNGKTLVDV…ILFMKPLSWK (559 aa)) are extracellular. Residues asparagine 52, asparagine 203, asparagine 266, asparagine 330, asparagine 342, asparagine 477, and asparagine 542 are each glycosylated (N-linked (GlcNAc...) asparagine). Residues 583–603 (LWLTSFISFFLVGCTVWVLEY) traverse the membrane as a helical segment. The Cytoplasmic segment spans residues 604–610 (KRNPDFS). Residues 611–631 (GPPRFQASTICWFAFSTMVFA) form a helical membrane-spanning segment. The Cytoplasmic segment spans residues 632–635 (PRER). A helical transmembrane segment spans residues 636-656 (VFSFWARALVIAWYFLVLVLT). The Extracellular segment spans residues 657-830 (QSYTASLASL…FTSRQLDIDS (174 aa)). Residues 831 to 851 (FLFLFVGVLLVCVMALGNFTY) traverse the membrane as a helical segment. Over 852–895 (CFLAKDQVSYLDKVEMSPCSSSQQMPVKRKTQLNMSQVHDQDSL) the chain is Cytoplasmic. The segment at 873–895 (SQQMPVKRKTQLNMSQVHDQDSL) is disordered.

The protein belongs to the glutamate-gated ion channel (TC 1.A.10.1) family. In terms of assembly, may form heteromers. As to expression, expressed predominantly in roots.

The protein resides in the membrane. Its function is as follows. Glutamate-gated receptor that probably acts as a non-selective cation channel. May be involved in light-signal transduction and calcium homeostasis via the regulation of calcium influx into cells. The polypeptide is Glutamate receptor 2.3 (GLR2.3) (Arabidopsis thaliana (Mouse-ear cress)).